The chain runs to 101 residues: NADH-quinone oxidoreductase subunit K (101 aa).

Transmembrane regions (helical) follow at residues 2 to 22, 28 to 48, and 62 to 82; these read TLSA…YGAL, VIVL…FVAF, and FALF…AALI.

The protein belongs to the complex I subunit 4L family. NDH-1 is composed of 14 different subunits. Subunits NuoA, H, J, K, L, M, N constitute the membrane sector of the complex.

Its subcellular location is the cell membrane. The catalysed reaction is a quinone + NADH + 5 H(+)(in) = a quinol + NAD(+) + 4 H(+)(out). In terms of biological role, NDH-1 shuttles electrons from NADH, via FMN and iron-sulfur (Fe-S) centers, to quinones in the respiratory chain. The immediate electron acceptor for the enzyme in this species is believed to be a menaquinone. Couples the redox reaction to proton translocation (for every two electrons transferred, four hydrogen ions are translocated across the cytoplasmic membrane), and thus conserves the redox energy in a proton gradient. The sequence is that of NADH-quinone oxidoreductase subunit K from Geobacillus kaustophilus (strain HTA426).